The following is a 122-amino-acid chain: Large ribosomal subunit protein uL18 (122 aa).

This sequence belongs to the universal ribosomal protein uL18 family. Part of the 50S ribosomal subunit; part of the 5S rRNA/L5/L18/L25 subcomplex. Contacts the 5S and 23S rRNAs.

This is one of the proteins that bind and probably mediate the attachment of the 5S RNA into the large ribosomal subunit, where it forms part of the central protuberance. The protein is Large ribosomal subunit protein uL18 of Geotalea uraniireducens (strain Rf4) (Geobacter uraniireducens).